A 770-amino-acid polypeptide reads, in one-letter code: Transferrin receptor protein 1 (770 aa).

The Cytoplasmic segment spans residues 1-70 (MMDQARSAFS…KPKRCNGFIC (70 aa)). The segment at 1–70 (MMDQARSAFS…KPKRCNGFIC (70 aa)) is mediates interaction with SH3BP4. 2 positions are modified to phosphoserine: Ser10 and Ser19. Residue Tyr20 is modified to Phosphotyrosine. Positions 20-23 (YTRF) match the Endocytosis signal motif. Position 21 is a phosphothreonine (Thr21). Ser24 carries the phosphoserine modification. Positions 61 to 64 (KPKR) match the Stop-transfer sequence motif. Residues Cys65 and Cys70 are each lipidated (S-palmitoyl cysteine). The helical; Signal-anchor for type II membrane protein transmembrane segment at 71 to 90 (YGTIAVVLFFLIGFMIGYLG) threads the bilayer. The Extracellular segment spans residues 91–770 (YCKRVEPKAG…GDIWDIDNEF (680 aa)). The interval 102-122 (ERPTGTEALGTERTEPSETEE) is disordered. Thr107 carries O-linked (GalNAc...) threonine glycosylation. In terms of domain architecture, PA spans 233–323 (SKATTVTGRL…GTGDPYTPGF (91 aa)). Residues Asn261, Asn327, and Asn384 are each glycosylated (N-linked (GlcNAc...) asparagine). A ligand-binding region spans residues 579-770 (TMDLYENLNQ…GDIWDIDNEF (192 aa)). The short motif at 656-658 (RGD) is the Cell attachment site element. 2 N-linked (GlcNAc...) asparagine glycosylation sites follow: Asn732 and Asn737.

The protein belongs to the peptidase M28 family. M28B subfamily. Homodimer; disulfide-linked. Binds one transferrin molecule per subunit. Interacts with SH3BP4. Interacts with STEAP3; facilitates TFRC endocytosis in erythroid precursor cells. Post-translationally, stearoylated by ZDHHC6 which inhibits TFRC-mediated activation of the JNK pathway and promotes mitochondrial fragmentation. Stearoylation does not affect iron uptake. N- and O-glycosylated, phosphorylated and palmitoylated.

Its subcellular location is the cell membrane. It localises to the melanosome. Cellular uptake of iron occurs via receptor-mediated endocytosis of ligand-occupied transferrin receptor into specialized endosomes. Endosomal acidification leads to iron release. The apotransferrin-receptor complex is then recycled to the cell surface with a return to neutral pH and the concomitant loss of affinity of apotransferrin for its receptor. Transferrin receptor is necessary for development of erythrocytes and the nervous system. Positively regulates T and B cell proliferation through iron uptake. Acts as a lipid sensor that regulates mitochondrial fusion by regulating activation of the JNK pathway. When dietary levels of stearate (C18:0) are low, promotes activation of the JNK pathway, resulting in HUWE1-mediated ubiquitination and subsequent degradation of the mitofusin MFN2 and inhibition of mitochondrial fusion. When dietary levels of stearate (C18:0) are high, TFRC stearoylation inhibits activation of the JNK pathway and thus degradation of the mitofusin MFN2. Mediates uptake of NICOL1 into fibroblasts where it may regulate extracellular matrix production. The chain is Transferrin receptor protein 1 (TFRC) from Canis lupus familiaris (Dog).